The primary structure comprises 445 residues: Allantoinase (445 aa).

Zn(2+)-binding residues include H63, H65, K150, H186, H238, and D311. An N6-carboxylysine modification is found at K150.

This sequence belongs to the metallo-dependent hydrolases superfamily. Allantoinase family. In terms of assembly, homotetramer. Requires Zn(2+) as cofactor. Post-translationally, carboxylation allows a single lysine to coordinate two zinc ions.

It catalyses the reaction (S)-allantoin + H2O = allantoate + H(+). The protein operates within nitrogen metabolism; (S)-allantoin degradation; allantoate from (S)-allantoin: step 1/1. In terms of biological role, catalyzes the conversion of allantoin (5-ureidohydantoin) to allantoic acid by hydrolytic cleavage of the five-member hydantoin ring. This chain is Allantoinase, found in Streptomyces avermitilis (strain ATCC 31267 / DSM 46492 / JCM 5070 / NBRC 14893 / NCIMB 12804 / NRRL 8165 / MA-4680).